Reading from the N-terminus, the 461-residue chain is D-phenylhydantoinase (461 aa).

Positions 59, 61, and 151 each coordinate a divalent metal cation. N6-carboxylysine is present on lysine 151. Tyrosine 156 is a binding site for substrate. A divalent metal cation-binding residues include histidine 182 and histidine 239. Serine 286 serves as a coordination point for substrate. Aspartate 313 contacts a divalent metal cation. Asparagine 335 is a binding site for substrate.

It belongs to the metallo-dependent hydrolases superfamily. Hydantoinase/dihydropyrimidinase family. Homotetramer. A divalent metal cation serves as cofactor. Carboxylation allows a single lysine to coordinate two divalent metal cations.

It carries out the reaction D-5-phenylhydantoin + H2O = N-carbamoyl-D-phenylglycine + H(+). In terms of biological role, catalyzes the stereospecific hydrolysis of the cyclic amide bond of D-hydantoin derivatives with an aromatic side chains at the 5'-position. Has no activity on dihydropyrimidines. The physiological function is unknown. The polypeptide is D-phenylhydantoinase (Escherichia coli O9:H4 (strain HS)).